Consider the following 195-residue polypeptide: Imidazoleglycerol-phosphate dehydratase (195 aa).

This sequence belongs to the imidazoleglycerol-phosphate dehydratase family.

Its subcellular location is the cytoplasm. It catalyses the reaction D-erythro-1-(imidazol-4-yl)glycerol 3-phosphate = 3-(imidazol-4-yl)-2-oxopropyl phosphate + H2O. Its pathway is amino-acid biosynthesis; L-histidine biosynthesis; L-histidine from 5-phospho-alpha-D-ribose 1-diphosphate: step 6/9. This chain is Imidazoleglycerol-phosphate dehydratase, found in Methanosphaerula palustris (strain ATCC BAA-1556 / DSM 19958 / E1-9c).